A 187-amino-acid polypeptide reads, in one-letter code: Ribosome maturation factor RimM (187 aa).

Over residues 1–17 (MTSTPSPSTADPNSTND) the composition is skewed to polar residues. The disordered stretch occupies residues 1-21 (MTSTPSPSTADPNSTNDWLPV). Residues 111 to 184 (EGEFHLLDLV…WLLLTPPPGL (74 aa)) enclose the PRC barrel domain.

It belongs to the RimM family. As to quaternary structure, binds ribosomal protein uS19.

Its subcellular location is the cytoplasm. Functionally, an accessory protein needed during the final step in the assembly of 30S ribosomal subunit, possibly for assembly of the head region. Essential for efficient processing of 16S rRNA. May be needed both before and after RbfA during the maturation of 16S rRNA. It has affinity for free ribosomal 30S subunits but not for 70S ribosomes. This chain is Ribosome maturation factor RimM, found in Synechococcus sp. (strain CC9311).